Here is a 584-residue protein sequence, read N- to C-terminus: 65 kDa membrane protein (584 aa).

The signal sequence occupies residues Met-1–Ala-30. MAP repeat units follow at residues Gly-45–Lys-154, Asp-156–Ala-265, Lys-266–Arg-374, Tyr-375–Lys-474, and Ala-475–Lys-584.

It is found in the cell membrane. Functionally, binds various plasma and ECM-proteins. This is 65 kDa membrane protein from Staphylococcus aureus (strain Newman).